Here is a 324-residue protein sequence, read N- to C-terminus: Taste receptor type 2 member 116 (324 aa).

Residues 1–2 lie on the Extracellular side of the membrane; the sequence is MN. Residues 3-23 traverse the membrane as a helical segment; the sequence is GVLYITFTVILSVEVIIGNFG. Residues 24-55 lie on the Cytoplasmic side of the membrane; sequence NGIIALVNIMDLAKRRKISSVDQILTALAISR. A helical transmembrane segment spans residues 56–76; it reads IVLLWLVLVSWWLSMFYPGQW. Residues 77-94 lie on the Extracellular side of the membrane; that stretch reads MTEGIDVIVHNVWTTLNQ. The helical transmembrane segment at 95 to 115 threads the bilayer; the sequence is ISLWLATSFSVFCFLKVANFS. At 116–128 the chain is on the cytoplasmic side; the sequence is NTIFFYLKIRVKK. A helical membrane pass occupies residues 129–149; it reads VMTGTLIMFLLLLGLNIIVIN. The Extracellular segment spans residues 150–183; it reads ASKTILIPEYKVNMSNSLNLKNTQISMLFPFANT. Residue Asn-162 is glycosylated (N-linked (GlcNAc...) asparagine). A helical membrane pass occupies residues 184–204; that stretch reads LFGFIPFAVSLVTFLLLFFSL. Residues 205–236 lie on the Cytoplasmic side of the membrane; that stretch reads WKHQRKMHHGAQGCRDSSTKAHIRVLQTLIAS. Residues 237–257 traverse the membrane as a helical segment; it reads ILLYFVFFLSLVVKVWISLFL. Over 258-261 the chain is Extracellular; that stretch reads ERML. The helical transmembrane segment at 262-282 threads the bilayer; that stretch reads LLLITQAAKIAFPSLHPWVLI. Residues 283 to 324 lie on the Cytoplasmic side of the membrane; that stretch reads LGNAKLRKASLSALQWLRCRHKDEHRRVQRPEVHSCGSSCMP.

It belongs to the G-protein coupled receptor T2R family.

The protein resides in the membrane. Its function is as follows. Putative taste receptor which may play a role in the perception of bitterness. In Rattus norvegicus (Rat), this protein is Taste receptor type 2 member 116.